The following is a 151-amino-acid chain: MSNLEKSLRHEVILDIIESKCICKQEELIIELKECGINVTQATLSRDLHEMNIIRKSFENHEHRYIVTKEDKFIKKFKNIFKSSVRSISMQEYFISVNTLDGMASLIGEFIDRLGDGRIAGTVAKKNHILVLCRSVNATQQIFKELDSLRV.

It belongs to the ArgR family.

It is found in the cytoplasm. Its pathway is amino-acid degradation; L-arginine degradation via ADI pathway. Functionally, regulates the transcription of the arc operon, involved in arginine catabolism. The polypeptide is Arginine regulator (argR1) (Clostridium perfringens (strain 13 / Type A)).